Here is a 382-residue protein sequence, read N- to C-terminus: Protein delta homolog 2 (382 aa).

Residues 1 to 26 form the signal peptide; it reads MPSGCRCLNLVCLLCILGATSQPARA. EGF-like domains follow at residues 27–58, 62–89, 91–129, and 131–172; these read DDCS…LHCE, RMPG…KFCD, DEHI…RGCE, and KAGP…AHCE. The Extracellular portion of the chain corresponds to 27–305; the sequence is DDCSSHCDLA…RQESGLGESS (279 aa). Disulfide bonds link cysteine 29–cysteine 40, cysteine 33–cysteine 46, cysteine 48–cysteine 57, cysteine 66–cysteine 71, cysteine 79–cysteine 88, cysteine 95–cysteine 107, cysteine 101–cysteine 117, cysteine 119–cysteine 128, cysteine 135–cysteine 148, cysteine 142–cysteine 160, cysteine 162–cysteine 171, cysteine 178–cysteine 189, cysteine 183–cysteine 198, cysteine 200–cysteine 209, cysteine 216–cysteine 227, cysteine 221–cysteine 236, and cysteine 238–cysteine 247. Asparagine 157 carries an N-linked (GlcNAc...) asparagine glycan. One can recognise an EGF-like 5; calcium-binding domain in the interval 174–210; it reads NVDDCLMRPCANGATCIDGINRFSCLCPEGFAGRFCT. An EGF-like 6; calcium-binding domain is found at 212 to 248; sequence NLDDCASRPCQRGARCRDRVHDFDCLCPSGYGGKTCE. The chain crosses the membrane as a helical span at residues 306–326; it reads LVALVVFGSLTAALVLATVLL. Over 327–382 the chain is Cytoplasmic; sequence TLRAWRRGICPTGPCCYPAPHYAPARQDQECQVSMLPAGFPLSPDLPPEPGKTTAL.

In terms of tissue distribution, detected in a number of tissues including lung, brain, adrenal gland, testis, adult liver, placenta, ovary and thymus. Not detected in fetal liver or in adult spleen, muscle and heart.

The protein localises to the membrane. Functionally, regulates adipogenesis. This Mus musculus (Mouse) protein is Protein delta homolog 2 (Dlk2).